The chain runs to 73 residues: Protein SlyX homolog (73 aa).

The protein belongs to the SlyX family.

The protein is Protein SlyX homolog of Pasteurella multocida (strain Pm70).